We begin with the raw amino-acid sequence, 93 residues long: Cell division protein CrgA (93 aa).

The next 2 helical transmembrane spans lie at 31 to 51 (VWFV…LMVF) and 70 to 90 (LGPW…LLTM).

This sequence belongs to the CrgA family.

It localises to the cell membrane. Its function is as follows. Involved in cell division. The protein is Cell division protein CrgA of Mycobacterium leprae (strain Br4923).